We begin with the raw amino-acid sequence, 229 residues long: Ribosome maturation factor RimM (229 aa).

The disordered stretch occupies residues 1 to 39 (MAGHDSGSAKRGRSPSFGVFVRKPVERAPTKGAGDGAAD). Residues 148-229 (ADEFYWVDLI…RIVVDWEADY (82 aa)) form the PRC barrel domain.

This sequence belongs to the RimM family. In terms of assembly, binds ribosomal protein uS19.

The protein resides in the cytoplasm. An accessory protein needed during the final step in the assembly of 30S ribosomal subunit, possibly for assembly of the head region. Essential for efficient processing of 16S rRNA. May be needed both before and after RbfA during the maturation of 16S rRNA. It has affinity for free ribosomal 30S subunits but not for 70S ribosomes. The chain is Ribosome maturation factor RimM from Burkholderia thailandensis (strain ATCC 700388 / DSM 13276 / CCUG 48851 / CIP 106301 / E264).